Reading from the N-terminus, the 548-residue chain is Esterase-5A (548 aa).

The N-terminal stretch at 1 to 19 (MHLVRWLICLIQLWIQLGA) is a signal peptide. A disulfide bridge connects residues Cys-87 and Cys-106. Residues Asn-95 and Asn-116 are each glycosylated (N-linked (GlcNAc...) asparagine). The active-site Acyl-ester intermediate is the Ser-210. Cys-262 and Cys-274 are disulfide-bonded. Asn-479 carries an N-linked (GlcNAc...) asparagine glycan. Cys-518 and Cys-539 are joined by a disulfide.

Belongs to the type-B carboxylesterase/lipase family.

It localises to the secreted. It carries out the reaction a carboxylic ester + H2O = an alcohol + a carboxylate + H(+). In Drosophila persimilis (Fruit fly), this protein is Esterase-5A (Est-5A).